The following is a 226-amino-acid chain: Ornithine decarboxylase antizyme (226 aa).

This sequence belongs to the ODC antizyme family. As to quaternary structure, interacts with ODC and thereby sterically blocks ODC homodimerization.

Its function is as follows. Ornithine decarboxylase (ODC) antizyme protein that negatively regulates ODC activity and intracellular polyamine biosynthesis in response to increased intracellular polyamine levels. Binds to ODC monomers, inhibiting the assembly of the functional ODC homodimer, and targets the monomers for ubiquitin-independent proteolytic destruction by the 26S proteasome. This Schizosaccharomyces pombe (strain 972 / ATCC 24843) (Fission yeast) protein is Ornithine decarboxylase antizyme (spa1).